The following is a 545-amino-acid chain: CTP synthase (545 aa).

Residues 1–266 form an amidoligase domain region; that stretch reads MTTNYIFVTG…DDYICKRFSL (266 aa). Residue Ser14 participates in CTP binding. Position 14 (Ser14) interacts with UTP. ATP-binding positions include 15-20 and Asp72; that span reads SLGKGI. Residues Asp72 and Glu140 each coordinate Mg(2+). CTP contacts are provided by residues 147 to 149, 187 to 192, and Lys223; these read DIE and KTKPTQ. Residues 187–192 and Lys223 contribute to the UTP site; that span reads KTKPTQ. Residue 239–241 participates in ATP binding; it reads KDV. The Glutamine amidotransferase type-1 domain occupies 291–542; it reads TIGMVGKYIE…VKAASEYQKR (252 aa). Gly352 provides a ligand contact to L-glutamine. Cys379 serves as the catalytic Nucleophile; for glutamine hydrolysis. L-glutamine contacts are provided by residues 380–383, Glu403, and Arg470; that span reads LGMQ. Catalysis depends on residues His515 and Glu517.

It belongs to the CTP synthase family. Homotetramer.

It catalyses the reaction UTP + L-glutamine + ATP + H2O = CTP + L-glutamate + ADP + phosphate + 2 H(+). It carries out the reaction L-glutamine + H2O = L-glutamate + NH4(+). The catalysed reaction is UTP + NH4(+) + ATP = CTP + ADP + phosphate + 2 H(+). The protein operates within pyrimidine metabolism; CTP biosynthesis via de novo pathway; CTP from UDP: step 2/2. Allosterically activated by GTP, when glutamine is the substrate; GTP has no effect on the reaction when ammonia is the substrate. The allosteric effector GTP functions by stabilizing the protein conformation that binds the tetrahedral intermediate(s) formed during glutamine hydrolysis. Inhibited by the product CTP, via allosteric rather than competitive inhibition. Functionally, catalyzes the ATP-dependent amination of UTP to CTP with either L-glutamine or ammonia as the source of nitrogen. Regulates intracellular CTP levels through interactions with the four ribonucleotide triphosphates. This Klebsiella pneumoniae (strain 342) protein is CTP synthase.